A 144-amino-acid polypeptide reads, in one-letter code: uncharacterized protein (144 aa).

Positions 4 to 111 (VFCAIIAGEA…LPPRNGDKLS (108 aa)) constitute an HIT domain. A Histidine triad motif motif is present at residues 96-100 (HVHLH).

This is an uncharacterized protein from Mycobacterium tuberculosis (strain CDC 1551 / Oshkosh).